Here is a 218-residue protein sequence, read N- to C-terminus: Glutathione S-transferase Mu 1 (218 aa).

One can recognise a GST N-terminal domain in the interval 2 to 88; sequence PMILGYWNVR…YLARKHHLCG (87 aa). Residues 7 to 8, 43 to 46, Lys-50, and 59 to 60 each bind glutathione; these read YW, RSQW, and NL. Ser-67 is subject to Phosphoserine. 72 to 73 is a binding site for glutathione; sequence QS. Positions 90-208 constitute a GST C-terminal domain; it reads TEEERIRADI…KSSRYLSTPI (119 aa). Residue Tyr-116 coordinates substrate. Residues Ser-205 and Ser-210 each carry the phosphoserine modification.

Belongs to the GST superfamily. Mu family. In terms of assembly, homodimer or heterodimer.

The protein resides in the cytoplasm. It catalyses the reaction RX + glutathione = an S-substituted glutathione + a halide anion + H(+). The catalysed reaction is prostaglandin A2 + glutathione = prostaglandin A2-S-(R)-glutathione. It carries out the reaction prostaglandin J2 + glutathione = prostaglandin J2-S-(R)-glutathione. The enzyme catalyses prostaglandin J2 + glutathione = prostaglandin J2-S-(S)-glutathione. It catalyses the reaction prostaglandin A2 + glutathione = prostaglandin A2-S-(S)-glutathione. The catalysed reaction is 11(S)-hydroxy-14(S),15(S)-epoxy-(5Z,8Z,12E)-eicosatrienoate + glutathione = (11S,15S)-dihydroxy-14(R)-S-glutathionyl-(5Z,8Z,12E)-eicosatrienoate. Conjugation of reduced glutathione to a wide number of exogenous and endogenous hydrophobic electrophiles. The olfactory GST may be crucial for the acuity of the olfactory process. Participates in the formation of novel hepoxilin regioisomers. The sequence is that of Glutathione S-transferase Mu 1 from Rattus norvegicus (Rat).